A 291-amino-acid chain; its full sequence is Undecaprenyl-diphosphatase 2 (291 aa).

6 helical membrane-spanning segments follow: residues 39–59, 85–105, 118–138, 203–223, 231–251, and 262–282; these read PGAAFTAITQIGTEAAVLIYF, AQMGWLVIVGSIPIGVLGVTL, ITATMLIVMGVILGIADRLAA, FLLAIPAVLASGVFELKDAAA, PTVFATVIAFVSGYAVIAWFM, and FVWYRIALGIAIIALVATGAL.

Belongs to the UppP family.

The protein localises to the cell membrane. It carries out the reaction di-trans,octa-cis-undecaprenyl diphosphate + H2O = di-trans,octa-cis-undecaprenyl phosphate + phosphate + H(+). Functionally, catalyzes the dephosphorylation of undecaprenyl diphosphate (UPP). Confers resistance to bacitracin. This Streptomyces avermitilis (strain ATCC 31267 / DSM 46492 / JCM 5070 / NBRC 14893 / NCIMB 12804 / NRRL 8165 / MA-4680) protein is Undecaprenyl-diphosphatase 2.